We begin with the raw amino-acid sequence, 259 residues long: Hydroxyethylthiazole kinase 1 (259 aa).

M38 contributes to the substrate binding site. R113 and S158 together coordinate ATP. G185 is a binding site for substrate.

Belongs to the Thz kinase family. Mg(2+) serves as cofactor.

The catalysed reaction is 5-(2-hydroxyethyl)-4-methylthiazole + ATP = 4-methyl-5-(2-phosphooxyethyl)-thiazole + ADP + H(+). The protein operates within cofactor biosynthesis; thiamine diphosphate biosynthesis; 4-methyl-5-(2-phosphoethyl)-thiazole from 5-(2-hydroxyethyl)-4-methylthiazole: step 1/1. Its function is as follows. Catalyzes the phosphorylation of the hydroxyl group of 4-methyl-5-beta-hydroxyethylthiazole (THZ). The polypeptide is Hydroxyethylthiazole kinase 1 (Leuconostoc mesenteroides subsp. mesenteroides (strain ATCC 8293 / DSM 20343 / BCRC 11652 / CCM 1803 / JCM 6124 / NCDO 523 / NBRC 100496 / NCIMB 8023 / NCTC 12954 / NRRL B-1118 / 37Y)).